Here is a 930-residue protein sequence, read N- to C-terminus: Zn(2)-C6 fungal-type transcription factor FTF1c (930 aa).

Positions 137 to 164 (CIACRRKKIRCSGEKPACEHCLCSYIPC) form a DNA-binding region, zn(2)-C6 fungal-type.

It localises to the nucleus. In terms of biological role, zn(2)-C6 fungal-type transcription factor that has a role in the establishment of the fungus within the plant and/or the progress of the disease. Regulates the expression of virulence factors such as SIX1 and SIX6. This chain is Zn(2)-C6 fungal-type transcription factor FTF1c, found in Fusarium oxysporum f. sp. lycopersici (strain 4287 / CBS 123668 / FGSC 9935 / NRRL 34936) (Fusarium vascular wilt of tomato).